A 380-amino-acid chain; its full sequence is tRNA-specific 2-thiouridylase MnmA (380 aa).

Residues 9–16 and Met35 each bind ATP; that span reads GVSGGVDS. The segment at 94–96 is interaction with target base in tRNA; sequence NPD. Cys99 serves as the catalytic Nucleophile. A disulfide bond links Cys99 and Cys195. Gly123 contacts ATP. The segment at 145–147 is interaction with tRNA; that stretch reads KDQ. The Cysteine persulfide intermediate role is filled by Cys195. An interaction with tRNA region spans residues 308–309; the sequence is RY.

Belongs to the MnmA/TRMU family.

It is found in the cytoplasm. The enzyme catalyses S-sulfanyl-L-cysteinyl-[protein] + uridine(34) in tRNA + AH2 + ATP = 2-thiouridine(34) in tRNA + L-cysteinyl-[protein] + A + AMP + diphosphate + H(+). Its function is as follows. Catalyzes the 2-thiolation of uridine at the wobble position (U34) of tRNA, leading to the formation of s(2)U34. The protein is tRNA-specific 2-thiouridylase MnmA of Stenotrophomonas maltophilia (strain K279a).